We begin with the raw amino-acid sequence, 249 residues long: DNA polymerase sliding clamp (249 aa).

It belongs to the PCNA family. As to quaternary structure, homotrimer. The subunits circularize to form a toroid; DNA passes through its center. Replication factor C (RFC) is required to load the toroid on the DNA.

Sliding clamp subunit that acts as a moving platform for DNA processing. Responsible for tethering the catalytic subunit of DNA polymerase and other proteins to DNA during high-speed replication. The polypeptide is DNA polymerase sliding clamp (Nanoarchaeum equitans (strain Kin4-M)).